An 86-amino-acid polypeptide reads, in one-letter code: Testis-expressed protein 54 (86 aa).

Over residues 1-34 (MGCCQDKNRWASDEQARDEVTEDGREGNEVDNSG) the composition is skewed to basic and acidic residues. Disordered stretches follow at residues 1–43 (MGCC…SNES) and 57–86 (SRRESSRSGKQDNQMQERKHEGSHKEPEKG).

In terms of tissue distribution, expressed in Testis.

This Mus musculus (Mouse) protein is Testis-expressed protein 54.